The sequence spans 284 residues: Bifunctional protein FolD (284 aa).

NADP(+) contacts are provided by residues Gly165–Ser167, Ile190, and Ile231.

Belongs to the tetrahydrofolate dehydrogenase/cyclohydrolase family. In terms of assembly, homodimer.

It carries out the reaction (6R)-5,10-methylene-5,6,7,8-tetrahydrofolate + NADP(+) = (6R)-5,10-methenyltetrahydrofolate + NADPH. The catalysed reaction is (6R)-5,10-methenyltetrahydrofolate + H2O = (6R)-10-formyltetrahydrofolate + H(+). It functions in the pathway one-carbon metabolism; tetrahydrofolate interconversion. In terms of biological role, catalyzes the oxidation of 5,10-methylenetetrahydrofolate to 5,10-methenyltetrahydrofolate and then the hydrolysis of 5,10-methenyltetrahydrofolate to 10-formyltetrahydrofolate. The protein is Bifunctional protein FolD of Alkaliphilus metalliredigens (strain QYMF).